The primary structure comprises 190 residues: Peptidyl-prolyl cis-trans isomerase A (190 aa).

The N-terminal stretch at 1 to 23 is a signal peptide; that stretch reads MSKRILAAVVTVLSLTAFSPAFA. The region spanning 26 to 187 is the PPIase cyclophilin-type domain; it reads TSTHVLLTTS…KPIVIQSAKI (162 aa).

It belongs to the cyclophilin-type PPIase family.

It is found in the periplasm. It catalyses the reaction [protein]-peptidylproline (omega=180) = [protein]-peptidylproline (omega=0). Its function is as follows. PPIases accelerate the folding of proteins. It catalyzes the cis-trans isomerization of proline imidic peptide bonds in oligopeptides. The sequence is that of Peptidyl-prolyl cis-trans isomerase A (rotA) from Dickeya dadantii (strain 3937) (Erwinia chrysanthemi (strain 3937)).